The primary structure comprises 258 residues: 5'-nucleotidase SurE (258 aa).

The a divalent metal cation site is built by Asp8, Asp9, Ser40, and Asn93.

This sequence belongs to the SurE nucleotidase family. It depends on a divalent metal cation as a cofactor.

The protein resides in the cytoplasm. The catalysed reaction is a ribonucleoside 5'-phosphate + H2O = a ribonucleoside + phosphate. In terms of biological role, nucleotidase that shows phosphatase activity on nucleoside 5'-monophosphates. This chain is 5'-nucleotidase SurE, found in Afipia carboxidovorans (strain ATCC 49405 / DSM 1227 / KCTC 32145 / OM5) (Oligotropha carboxidovorans).